The primary structure comprises 277 residues: Protein CIMAP1D (277 aa).

STPGR repeat units lie at residues 122-148, 202-227, and 238-263; these read PGPG…LGSR, PGPG…ILGR, and PGPG…MGIR. The tract at residues 181 to 277 is disordered; it reads PSYTVVGRTP…ASTMVGDTKC (97 aa).

This sequence belongs to the CIMAP family.

This is Protein CIMAP1D (Cimap1d) from Mus musculus (Mouse).